A 472-amino-acid chain; its full sequence is Phosphoenolpyruvate carboxykinase (ATP), glycosomal (472 aa).

An ATP-binding site is contributed by 221 to 228 (GLSGTGKT).

Belongs to the phosphoenolpyruvate carboxykinase (ATP) family. Homodimer.

The protein localises to the glycosome. The catalysed reaction is oxaloacetate + ATP = phosphoenolpyruvate + ADP + CO2. It functions in the pathway carbohydrate biosynthesis; gluconeogenesis. The polypeptide is Phosphoenolpyruvate carboxykinase (ATP), glycosomal (PEPCK) (Trypanosoma cruzi).